The following is a 332-amino-acid chain: Melanocortin receptor 4 (332 aa).

The Extracellular segment spans residues 1 to 43; the sequence is MNSTHHHGMYTSLHLWNRSSYGLHGNASESLGKGHPDGGCYEQ. N-linked (GlcNAc...) asparagine glycans are attached at residues Asn2, Asn17, and Asn26. Cystine bridges form between Cys40–Cys279 and Cys271–Cys277. A helical membrane pass occupies residues 44–69; the sequence is LFVSPEVFVTLGVISLLENILVIVAI. Over 70–81 the chain is Cytoplasmic; it reads AKNKNLHSPMYF. The helical transmembrane segment at 82–106 threads the bilayer; it reads FICSLAVADMLVSVSNGSETIVITL. Glu100 lines the Ca(2+) pocket. Residues 107–123 lie on the Extracellular side of the membrane; sequence LNSTDTDAQSFTVNIDN. A glycan (N-linked (GlcNAc...) asparagine) is linked at Asn108. Ca(2+) contacts are provided by Asp122 and Asp126. The helical transmembrane segment at 124-145 threads the bilayer; it reads VIDSVICSSLLASICSLLSIAV. At 146–165 the chain is on the cytoplasmic side; it reads DRYFTIFYALQYHNIMTVRR. The helical transmembrane segment at 166–186 threads the bilayer; that stretch reads VGIIISCIWAACTVSGVLFII. The Extracellular portion of the chain corresponds to 187–191; that stretch reads YSDSS. A helical membrane pass occupies residues 192-215; that stretch reads AVIICLISMFFTMLVLMASLYVHM. Residues 216–248 are Cytoplasmic-facing; the sequence is FLMARLHIKRIAVLPGTGTIRQGTNMKGAITLT. Residues 249-271 form a helical membrane-spanning segment; sequence ILIGVFVVCWAPFFLHLLFYISC. Residues 272–280 are Extracellular-facing; that stretch reads PQNPYCVCF. The helical transmembrane segment at 281-304 threads the bilayer; the sequence is MSHFNLYLILIMCNAVIDPLIYAL. Residues 305-332 lie on the Cytoplasmic side of the membrane; it reads RSQELRKTFKEIICFYPLGGICELSSRY. Cys318 carries the S-palmitoyl cysteine lipid modification.

This sequence belongs to the G-protein coupled receptor 1 family. As to quaternary structure, homodimer; disulfide-linked, also forms higher order oligomers. Interacts with GNAS. Interacts with ATRNL1. Interacts with MGRN1; this interaction competes with GNAS-binding and thus inhibits agonist-induced cAMP production. Interacts with MRAP and MRAP2; these associated factors increase ligand-sensitivity and generation of cAMP.

Its subcellular location is the cell membrane. Functionally, hormone receptor that acts as a key component of the leptin-melanocortin pathway at the intersection of homeostatic maintenance of energetic state. Plays a role in regulating food intake: activation by a stimulating hormone such as anorexigenic alpha-melanocyte stimulating hormone (alpha-MSH) inhibits appetite, whereas binding to a natural antagonist like Agouti-related protein/AGRP promotes appetite. G-protein-coupled receptor that activates conventional Galphas signaling leading to induction of anorexogenic signaling in the hypothalamus to result in negative energy balance. Regulates the firing activity of neurons from the hypothalamus by alpha-MSH and AGRP independently of Galphas signaling by ligand-induced coupling of closure of inwardly rectifying potassium channel KCNJ13. In intestinal epithelial cells, plays a role in the inhibition of hepatic glucose production via nesfatin-1/NUCB2 leading to increased cyclic adenosine monophosphate (cAMP) levels and glucagon-like peptide 1 (GLP-1) secretion in the intestinal epithelium. This chain is Melanocortin receptor 4 (Mc4r), found in Mus musculus (Mouse).